We begin with the raw amino-acid sequence, 102 residues long: Monothiol glutaredoxin-S5 (102 aa).

One can recognise a Glutaredoxin domain in the interval 1–101; sequence MENLQKMISE…PMLKRAGALW (101 aa). C21 is a binding site for [2Fe-2S] cluster. A Responsive for interaction with TGA factors motif is present at residues 99–102; the sequence is ALWL.

The protein belongs to the glutaredoxin family. CC-type subfamily.

It is found in the cytoplasm. The protein localises to the nucleus. Functionally, may only reduce GSH-thiol disulfides, but not protein disulfides. This is Monothiol glutaredoxin-S5 (GRXS5) from Arabidopsis thaliana (Mouse-ear cress).